We begin with the raw amino-acid sequence, 361 residues long: Cdc42 effector protein 1 (361 aa).

The interval 1-29 is disordered; that stretch reads MPGPQGAGGAPAMNLGKLSPVGWVSSSQG. Residues Ser19 and Ser27 each carry the phosphoserine modification. Residue Thr34 is modified to Phosphothreonine. Residues 38 to 52 form the CRIB domain; sequence ISPPLGDFRHTMHVG. Position 39 is a phosphoserine (Ser39). Arg53 bears the Omega-N-methylarginine mark. Phosphoserine is present on residues Ser65, Ser73, Ser77, Ser101, Ser113, Ser121, Ser139, Ser180, Ser190, Ser192, and Ser195. The tract at residues 161–186 is disordered; it reads CTISRLPRPEKPRDRDRDSSFPAEPE. Residues 167-186 show a composition bias toward basic and acidic residues; it reads PRPEKPRDRDRDSSFPAEPE. Disordered stretches follow at residues 218-300 and 320-361; these read EGSA…SRHH and SWGS…EVKV. A run of 4 repeats spans residues 220–226, 229–235, 236–242, and 243–249. Residues 220 to 249 are 4 X 7 AA tandem repeats of [PT]-[AT]-A-[ENT]-[PT]-[PTS]-[AG]; sequence SAAETPAPAPAASPPASVANPPAPASSPSL. A phosphoserine mark is found at Ser270, Ser320, and Ser323. Residues 332 to 347 are compositionally biased toward polar residues; it reads QAGSRTPVPSTVQANT. Over residues 351 to 361 the composition is skewed to acidic residues; the sequence is ADAEEDDEVKV.

The protein belongs to the BORG/CEP family. In terms of assembly, interacts with RHOQ and CDC42, in a GTP-dependent manner.

It is found in the endomembrane system. Its subcellular location is the cytoplasm. It localises to the cytoskeleton. In terms of biological role, probably involved in the organization of the actin cytoskeleton. Induced membrane extensions in fibroblasts. The protein is Cdc42 effector protein 1 of Bos taurus (Bovine).